Reading from the N-terminus, the 868-residue chain is Leucine-rich repeat receptor-like serine/threonine-protein kinase At2g14510 (868 aa).

Positions 1 to 23 are cleaved as a signal peptide; it reads METRNKFMLLACATFSIMSLVKS. Topologically, residues 24–510 are extracellular; the sequence is QNQQGFISLD…KHQPKSWLVA (487 aa). N-linked (GlcNAc...) asparagine glycosylation is found at asparagine 48, asparagine 68, asparagine 231, asparagine 235, asparagine 258, asparagine 291, asparagine 433, and asparagine 446. LRR repeat units lie at residues 412–435, 436–458, and 460–482; these read RIISLDLSLSGLTGVISPSIQNLT, MLRELDLSNNNLTGEVPEFLATI, and PLLVIHLRGNNLRGSVPQALQDR. An N-linked (GlcNAc...) asparagine glycan is attached at asparagine 495. The chain crosses the membrane as a helical span at residues 511-531; the sequence is IVASISCVAVTIIVLVLIFIF. Topologically, residues 532–868 are cytoplasmic; it reads RRRKSSTRKV…TFISDIPSAR (337 aa). A Protein kinase domain is found at 563 to 832; that stretch reads NNFEVVLGKG…NMTRVAHELN (270 aa). ATP-binding positions include 569–577 and lysine 590; that span reads LGKGGFGVV. At tyrosine 635 the chain carries Phosphotyrosine. Aspartate 687 functions as the Proton acceptor in the catalytic mechanism. Serine 721 bears the Phosphoserine mark. Residues threonine 722 and threonine 727 each carry the phosphothreonine modification. Phosphotyrosine is present on tyrosine 735.

The protein belongs to the protein kinase superfamily. Ser/Thr protein kinase family.

The protein resides in the cell membrane. It catalyses the reaction L-seryl-[protein] + ATP = O-phospho-L-seryl-[protein] + ADP + H(+). The enzyme catalyses L-threonyl-[protein] + ATP = O-phospho-L-threonyl-[protein] + ADP + H(+). The chain is Leucine-rich repeat receptor-like serine/threonine-protein kinase At2g14510 from Arabidopsis thaliana (Mouse-ear cress).